A 209-amino-acid chain; its full sequence is Molybdenum cofactor guanylyltransferase (209 aa).

Residues 13 to 15 (LAG), Lys-26, Asn-54, Asp-74, and Asp-104 each bind GTP. Asp-104 contributes to the Mg(2+) binding site.

Belongs to the MobA family. As to quaternary structure, monomer. Requires Mg(2+) as cofactor.

The protein resides in the cytoplasm. The enzyme catalyses Mo-molybdopterin + GTP + H(+) = Mo-molybdopterin guanine dinucleotide + diphosphate. In terms of biological role, transfers a GMP moiety from GTP to Mo-molybdopterin (Mo-MPT) cofactor (Moco or molybdenum cofactor) to form Mo-molybdopterin guanine dinucleotide (Mo-MGD) cofactor. This is Molybdenum cofactor guanylyltransferase from Acinetobacter baumannii (strain ACICU).